A 387-amino-acid chain; its full sequence is MNSIKLPRTIHIGGKGQVKKLTLGGTSPILLQTMWKESLLGADLLSIVKSLNELEQLGCDIVRFAVPDMDSAEQFVKLTRLTEMPLVADIHFDYKLALRCMDGDTAKIRINPGNIGSKEKTEEVIRKAKDTGTAIRIGVNSGSLPSDLKKKIEEANSKRNLSGDKKALDDEISLLRADTLTEAAARELEIFEKADFKDAVVSMKASNVRETVMANEIFAKKFDNPLHLGVTEAGPLIQGIVKSTIAFYRLLEQNIGSTIRVSLSDSCENEVIAGREILTECGKRQGGIRLISCPRCGRKGFDVQAFVKRWQTKLLSEKKDISIAVMGCVVNGPGEGKHADLGITGAEDSVIIFKHGAITKRLDLKKLTEEEKIKAVDKAFIEELQSL.

Positions 293, 296, 328, and 335 each coordinate [4Fe-4S] cluster.

It belongs to the IspG family. Requires [4Fe-4S] cluster as cofactor.

It catalyses the reaction (2E)-4-hydroxy-3-methylbut-2-enyl diphosphate + oxidized [flavodoxin] + H2O + 2 H(+) = 2-C-methyl-D-erythritol 2,4-cyclic diphosphate + reduced [flavodoxin]. It functions in the pathway isoprenoid biosynthesis; isopentenyl diphosphate biosynthesis via DXP pathway; isopentenyl diphosphate from 1-deoxy-D-xylulose 5-phosphate: step 5/6. Functionally, converts 2C-methyl-D-erythritol 2,4-cyclodiphosphate (ME-2,4cPP) into 1-hydroxy-2-methyl-2-(E)-butenyl 4-diphosphate. The chain is 4-hydroxy-3-methylbut-2-en-1-yl diphosphate synthase (flavodoxin) from Treponema denticola (strain ATCC 35405 / DSM 14222 / CIP 103919 / JCM 8153 / KCTC 15104).